Here is a 462-residue protein sequence, read N- to C-terminus: L-seryl-tRNA(Sec) selenium transferase (462 aa).

Lys293 is modified (N6-(pyridoxal phosphate)lysine).

This sequence belongs to the SelA family. Pyridoxal 5'-phosphate is required as a cofactor.

It is found in the cytoplasm. The enzyme catalyses L-seryl-tRNA(Sec) + selenophosphate + H(+) = L-selenocysteinyl-tRNA(Sec) + phosphate. It functions in the pathway aminoacyl-tRNA biosynthesis; selenocysteinyl-tRNA(Sec) biosynthesis; selenocysteinyl-tRNA(Sec) from L-seryl-tRNA(Sec) (bacterial route): step 1/1. In terms of biological role, converts seryl-tRNA(Sec) to selenocysteinyl-tRNA(Sec) required for selenoprotein biosynthesis. This chain is L-seryl-tRNA(Sec) selenium transferase, found in Clostridium botulinum (strain Loch Maree / Type A3).